The following is a 221-amino-acid chain: Carotenogenesis protein CarR (221 aa).

The next 6 helical transmembrane spans lie at 56 to 76 (LGLL…PLLL), 79 to 99 (APLL…ALSP), 107 to 127 (LGVG…GAPH), 136 to 156 (VCTV…LFAL), 166 to 186 (AVVA…LACE), and 191 to 211 (HVLS…VVIS).

It localises to the cell inner membrane. In terms of biological role, negative regulator of the carotenoid synthesis regulon. It is probably inactivated by protoporphyrin IX in the presence of blue light. Inactivation of CarR leads to loss of negative control over the carotenogenesis protein CarQ. This chain is Carotenogenesis protein CarR (carR), found in Myxococcus xanthus.